Consider the following 214-residue polypeptide: LexA repressor (214 aa).

Residues 28-48 constitute a DNA-binding region (H-T-H motif); it reads IRDIQRELSISSTSVVAYNLR. Active-site for autocatalytic cleavage activity residues include serine 133 and lysine 172.

This sequence belongs to the peptidase S24 family. In terms of assembly, homodimer.

It catalyses the reaction Hydrolysis of Ala-|-Gly bond in repressor LexA.. Functionally, represses a number of genes involved in the response to DNA damage (SOS response), including recA and lexA. In the presence of single-stranded DNA, RecA interacts with LexA causing an autocatalytic cleavage which disrupts the DNA-binding part of LexA, leading to derepression of the SOS regulon and eventually DNA repair. The chain is LexA repressor from Herpetosiphon aurantiacus (strain ATCC 23779 / DSM 785 / 114-95).